Consider the following 512-residue polypeptide: Cobyric acid synthase (512 aa).

Residues 262 to 442 (WLRVAAIRLP…WHGLLETDRF (181 aa)) form the GATase cobBQ-type domain. The active-site Nucleophile is the C343. Residue H434 is part of the active site.

The protein belongs to the CobB/CobQ family. CobQ subfamily.

Its pathway is cofactor biosynthesis; adenosylcobalamin biosynthesis. Its function is as follows. Catalyzes amidations at positions B, D, E, and G on adenosylcobyrinic A,C-diamide. NH(2) groups are provided by glutamine, and one molecule of ATP is hydrogenolyzed for each amidation. The chain is Cobyric acid synthase from Rhodococcus jostii (strain RHA1).